Reading from the N-terminus, the 286-residue chain is Secretory carrier-associated membrane protein 2 (286 aa).

2 stretches are compositionally biased toward basic and acidic residues: residues 1 to 10 (MAGRYDRNPF) and 54 to 63 (STKDMKKKEK). The segment at 1-63 (MAGRYDRNPF…STKDMKKKEK (63 aa)) is disordered. The Cytoplasmic segment spans residues 1–126 (MAGRYDRNPF…LQRMQYLAFS (126 aa)). Positions 52–89 (LDSTKDMKKKEKELQAKEAELNKRESELRRREEAASRA) form a coiled coil. A run of 4 helical transmembrane segments spans residues 127–147 (SLLG…AAWI), 152–172 (VMIW…AYVL), 189–209 (FGWF…SAVA), and 237–257 (IFYF…VVVI). The Cytoplasmic segment spans residues 258-286 (QQVYMYFRGSGKAAEMKREAARGAMRSAF).

The protein belongs to the SCAMP family.

The protein resides in the cell membrane. Its subcellular location is the cytoplasmic vesicle. It localises to the secretory vesicle membrane. Probably involved in membrane trafficking. The chain is Secretory carrier-associated membrane protein 2 (SCAMP2) from Oryza sativa subsp. japonica (Rice).